We begin with the raw amino-acid sequence, 444 residues long: NADH-dependent flavin oxidoreductase nadA (444 aa).

Residues 37-40 (ERMC) and glutamine 123 each bind FMN. Residues 127-149 (PGRQTPSHRQPEPISASDVPLDT) are disordered. 192-195 (HAAH) is a substrate binding site. 345 to 346 (AR) lines the FMN pocket.

Belongs to the NADH:flavin oxidoreductase/NADH oxidase family.

The protein localises to the cytoplasm. It is found in the cytosol. Its function is as follows. NADH-dependent flavin oxidoreductase; part of the gene cluster that mediates the biosynthesis of aflatoxins, a group of polyketide-derived furanocoumarins, and part of the most toxic and carcinogenic compounds among the known mycotoxins. The four major aflatoxins produced by A.parasiticus are aflatoxin B1 (AFB1), aflatoxin B2 (AFB2), aflatoxin G1 (AFG1) and aflatoxin G2 (AFG2). Within the aflatoxin pathway, the NADH-dependent flavin oxidoreductase nadA is specifically required for the last steps in which OMST is converted specifically to aflatoxin G1. The biosynthesis of aflatoxins begins with the norsolorinic acid synthase aflC that combines a hexanoyl starter unit produced by the fatty acid synthase aflA/aflB and 7 malonyl-CoA extender units to synthesize the precursor NOR. The second step is the conversion of NOR to averantin and requires the norsolorinic acid ketoreductase aflD, which catalyzes the dehydration of norsolorinic acid to form (1'S)-averantin. The norsolorinic acid reductases aflE and aflF may also play a role in the conversion of NOR to AVN. The cytochrome P450 monooxygenase aflG then catalyzes the hydroxylation of AVN to 5'hydroxyaverantin (HAVN). The next step is performed by the 5'-hydroxyaverantin dehydrogenase aflH that transforms HAVN to 5'-oxoaverantin (OAVN) which is further converted to averufin (AVF) by aflK that plays a dual role in the pathway, as a 5'-oxoaverantin cyclase that mediates conversion of 5'-oxoaverantin, as well as a versicolorin B synthase in a later step in the pathway. The averufin oxidase aflI catalyzes the conversion of AVF to versiconal hemiacetal acetate (VHA). VHA is then the substrate for the versiconal hemiacetal acetate esterase aflJ to yield versiconal (VAL). Versicolorin B synthase aflK then converts VAL to versicolorin B (VERB) by closing the bisfuran ring of aflatoxin which is required for DNA-binding, thus giving to aflatoxin its activity as a mutagen. Then, the activity of the versicolorin B desaturase aflL leads to versicolorin A (VERA). A branch point starts from VERB since it can also be converted to dihydrodemethylsterigmatocystin (DMDHST), probably also by aflL, VERA being a precursor for aflatoxins B1 and G1, and DMDHST for aflatoxins B2 and G2. Next, the versicolorin reductase aflM and the cytochrome P450 monooxygenase aflN are involved in conversion of VERA to demethylsterigmatocystin (DMST). AflX and aflY seem also involved in this step, through probable aflX-mediated epoxide ring-opening step following versicolorin A oxidation and aflY-mediated Baeyer-Villiger oxidation required for the formation of the xanthone ring. The methyltransferase aflO then leads to the modification of DMST to sterigmatocystin (ST), and of DMDHST to dihydrosterigmatocystin (DHST). Both ST and DHST are then substrates of the O-methyltransferase aflP to yield O-methylsterigmatocystin (OMST) and dihydro-O-methylsterigmatocystin (DHOMST), respectively. Finally OMST is converted to aflatoxins B1 and G1, and DHOMST to aflatoxins B2 and G2, via the action of several enzymes including O-methylsterigmatocystin oxidoreductase aflQ, the cytochrome P450 monooxygenase aflU, but also the NADH-dependent flavin oxidoreductase nadA which is specifically required for the synthesis of AFG1. This is NADH-dependent flavin oxidoreductase nadA from Aspergillus parasiticus (strain ATCC 56775 / NRRL 5862 / SRRC 143 / SU-1).